Consider the following 332-residue polypeptide: 6-phosphogluconolactonase (332 aa).

This sequence belongs to the cycloisomerase 2 family.

The catalysed reaction is 6-phospho-D-glucono-1,5-lactone + H2O = 6-phospho-D-gluconate + H(+). It participates in carbohydrate degradation; pentose phosphate pathway; D-ribulose 5-phosphate from D-glucose 6-phosphate (oxidative stage): step 2/3. In terms of biological role, catalyzes the hydrolysis of 6-phosphogluconolactone to 6-phosphogluconate. The sequence is that of 6-phosphogluconolactonase from Pectobacterium carotovorum subsp. carotovorum (strain PC1).